A 356-amino-acid chain; its full sequence is RuBisCO accumulation factor 1 (356 aa).

The N-terminal alpha-helix stretch occupies residues 7 to 185 (ALTTEVLQRL…RQALEKLLTD (179 aa)). The interval 209–342 (PYLVPVAGTA…LLLVLRPPQV (134 aa)) is C-terminal beta-sheet.

Belongs to the RAF family. As to quaternary structure, homodimer. Forms an RbcL(8)-Raf1(8) complex. Forms complexes of many stoichiometries with RbcL with and without RbcS. RbcX and Raf1 can bind simultaneously to RbcL.

Its subcellular location is the cytoplasm. In terms of biological role, a major RuBisCO chaperone. Acts after GroEL-GroES chaperonin to fold and/or assemble the large subunit of RuBisCO (ccbL, rbcL). Cooperates with RbcX in RbcL folding, plays the major role in assembly of dimers into RbcL(8)-Raf1(8) intermediate complexes. RbcS replaces Raf1, leading to holoenzyme formation. Required for optimal reconstitution of RuBisCO upon expression of rbcL-rbcS subunits in E.coli. Only interacts with the large subunit (cbbL, rbcL). Probably acts in the final stages of RuBisCO assembly, possibly participating in the addition of the small subunit (ccbS, rbcS). In Thermosynechococcus vestitus (strain NIES-2133 / IAM M-273 / BP-1), this protein is RuBisCO accumulation factor 1.